The sequence spans 938 residues: Protein O-mannosyl-transferase Tmtc2 (938 aa).

Residue Met1 is a topological domain, cytoplasmic. Residues 2-22 form a helical membrane-spanning segment; that stretch reads PSLEPWLWGDSCSWLGMLAML. At 23–34 the chain is on the extracellular side; that stretch reads RLRLHKSNMDFT. A helical transmembrane segment spans residues 35–55; that stretch reads CLFCCSLAFVLYLNTLGAGFV. The Cytoplasmic segment spans residues 56 to 108; that stretch reads YDDRRAILANADVSGGTPWQRSFSNDFWGTPLTDSGSHGSWRPLCVLSFRLNY. The chain crosses the membrane as a helical span at residues 109–129; it reads LIGGGFAPWGFHLVNNLLHCV. Over 130–139 the chain is Extracellular; that stretch reads ATALVVRVAR. Residues 140–160 form a helical membrane-spanning segment; that stretch reads TLLASVWAVLAAGALFAAHPI. At 161–164 the chain is on the cytoplasmic side; that stretch reads HTEA. Residues 165 to 185 form a helical membrane-spanning segment; the sequence is VAGVVGRADLAACVCYLLTYL. Over 186-208 the chain is Extracellular; it reads SYLRHMRWRESGDPRQWLALGAT. Residues 209 to 229 form a helical membrane-spanning segment; the sequence is LILAAAGLLCKETAITALLVC. Residues 230–249 are Cytoplasmic-facing; the sequence is ALFDVMRGLSGQVDKQRLRS. Residues 250–270 traverse the membrane as a helical segment; that stretch reads VCIVLGALFCMAYCRLVIVPG. At 271–291 the chain is on the extracellular side; sequence PQTAFSSADNPIARTPSAWTR. A helical membrane pass occupies residues 292–312; the sequence is LLTFLYLPVFNLRLLLQPNVL. Residues 313-510 lie on the Cytoplasmic side of the membrane; that stretch reads SFDWGMDALP…HACVLIMSLS (198 aa). A disordered region spans residues 450–480; the sequence is RSSSSCSNSTNSSSSSSSSSSSSSSSSSSLS. Residues 511–531 traverse the membrane as a helical segment; sequence FLALPFLPASNLLFYVGFVVA. Over 532–533 the chain is Extracellular; it reads ER. Residues 534–554 traverse the membrane as a helical segment; the sequence is LLYLPSVGFCLLVGYGVSKLM. The Cytoplasmic segment spans residues 555 to 562; the sequence is SCNQRTRN. A helical membrane pass occupies residues 563–580; it reads ILLLSFSLLLAAMSLRTL. Topologically, residues 581–938 are extracellular; sequence RRNADWRDEE…NLAKLGVTNV (358 aa). 9 TPR repeats span residues 602–635, 636–669, 670–703, 715–748, 753–786, 788–821, 822–855, 856–889, and 890–923; these read PKAL…RPNM, ADVH…RPNL, AVAY…DGAA, SSAY…LPGL, EILY…QPNQ, AAHL…APEQ, ASVY…APND, YTLV…RPGD, and AHAH…QPGD. Asn800 carries an N-linked (GlcNAc...) asparagine glycan.

It belongs to the TMTC family.

Its subcellular location is the membrane. It localises to the endoplasmic reticulum. The enzyme catalyses a di-trans,poly-cis-dolichyl beta-D-mannosyl phosphate + L-seryl-[protein] = 3-O-(alpha-D-mannosyl)-L-seryl-[protein] + a di-trans,poly-cis-dolichyl phosphate + H(+). The catalysed reaction is a di-trans,poly-cis-dolichyl beta-D-mannosyl phosphate + L-threonyl-[protein] = 3-O-(alpha-D-mannosyl)-L-threonyl-[protein] + a di-trans,poly-cis-dolichyl phosphate + H(+). It participates in protein modification; protein glycosylation. Its function is as follows. Transfers mannosyl residues to the hydroxyl group of serine or threonine residues. This is Protein O-mannosyl-transferase Tmtc2 from Drosophila melanogaster (Fruit fly).